The sequence spans 396 residues: Probable sugar efflux transporter (396 aa).

A run of 12 helical transmembrane segments spans residues V15–M35, G51–A71, L84–L104, M109–I129, Q137–G157, V168–L188, P209–Y229, N245–F265, F276–E296, T297–L317, V333–G353, and I365–L385.

The protein belongs to the major facilitator superfamily. SotB (TC 2.A.1.2) family.

The protein resides in the cell inner membrane. Functionally, involved in the efflux of sugars. The physiological role may be the reduction of the intracellular concentration of toxic sugars or sugar metabolites. This Haemophilus influenzae (strain PittGG) protein is Probable sugar efflux transporter.